Reading from the N-terminus, the 732-residue chain is Phosphoribosylformylglycinamidine synthase subunit PurL (732 aa).

His-42 is an active-site residue. Residues Tyr-45 and Lys-84 each contribute to the ATP site. Glu-86 lines the Mg(2+) pocket. Substrate contacts are provided by residues 87 to 90 (SHNH) and Arg-109. The Proton acceptor role is filled by His-88. Asp-110 contacts Mg(2+). Substrate is bound at residue Gln-238. Position 266 (Asp-266) interacts with Mg(2+). 310–312 (ESQ) contacts substrate. ATP-binding residues include Asp-496 and Gly-533. Asn-534 serves as a coordination point for Mg(2+). Ser-536 serves as a coordination point for substrate.

Belongs to the FGAMS family. As to quaternary structure, monomer. Part of the FGAM synthase complex composed of 1 PurL, 1 PurQ and 2 PurS subunits.

The protein localises to the cytoplasm. It catalyses the reaction N(2)-formyl-N(1)-(5-phospho-beta-D-ribosyl)glycinamide + L-glutamine + ATP + H2O = 2-formamido-N(1)-(5-O-phospho-beta-D-ribosyl)acetamidine + L-glutamate + ADP + phosphate + H(+). The protein operates within purine metabolism; IMP biosynthesis via de novo pathway; 5-amino-1-(5-phospho-D-ribosyl)imidazole from N(2)-formyl-N(1)-(5-phospho-D-ribosyl)glycinamide: step 1/2. Its function is as follows. Part of the phosphoribosylformylglycinamidine synthase complex involved in the purines biosynthetic pathway. Catalyzes the ATP-dependent conversion of formylglycinamide ribonucleotide (FGAR) and glutamine to yield formylglycinamidine ribonucleotide (FGAM) and glutamate. The FGAM synthase complex is composed of three subunits. PurQ produces an ammonia molecule by converting glutamine to glutamate. PurL transfers the ammonia molecule to FGAR to form FGAM in an ATP-dependent manner. PurS interacts with PurQ and PurL and is thought to assist in the transfer of the ammonia molecule from PurQ to PurL. This Campylobacter hominis (strain ATCC BAA-381 / DSM 21671 / CCUG 45161 / LMG 19568 / NCTC 13146 / CH001A) protein is Phosphoribosylformylglycinamidine synthase subunit PurL.